Here is a 160-residue protein sequence, read N- to C-terminus: SsrA-binding protein (160 aa).

Residues 131-160 (KKEYDKRHTERERDSDRELQRAVRTKGKDD) are disordered.

It belongs to the SmpB family.

The protein resides in the cytoplasm. Required for rescue of stalled ribosomes mediated by trans-translation. Binds to transfer-messenger RNA (tmRNA), required for stable association of tmRNA with ribosomes. tmRNA and SmpB together mimic tRNA shape, replacing the anticodon stem-loop with SmpB. tmRNA is encoded by the ssrA gene; the 2 termini fold to resemble tRNA(Ala) and it encodes a 'tag peptide', a short internal open reading frame. During trans-translation Ala-aminoacylated tmRNA acts like a tRNA, entering the A-site of stalled ribosomes, displacing the stalled mRNA. The ribosome then switches to translate the ORF on the tmRNA; the nascent peptide is terminated with the 'tag peptide' encoded by the tmRNA and targeted for degradation. The ribosome is freed to recommence translation, which seems to be the essential function of trans-translation. This is SsrA-binding protein from Pseudomonas syringae pv. tomato (strain ATCC BAA-871 / DC3000).